The sequence spans 420 residues: uncharacterized protein (420 aa).

It belongs to the mimivirus R160 family.

Its subcellular location is the virion. This is an uncharacterized protein from Acanthamoeba polyphaga mimivirus (APMV).